A 168-amino-acid polypeptide reads, in one-letter code: Phosphopantetheine adenylyltransferase (168 aa).

A substrate-binding site is contributed by Thr14. ATP contacts are provided by residues 14-15 (TF) and His22. The substrate site is built by Lys46, Leu78, and Arg92. Residues 93–95 (GLR), Glu103, and 128–134 (YSFISSS) contribute to the ATP site.

The protein belongs to the bacterial CoaD family. In terms of assembly, homohexamer. Mg(2+) serves as cofactor.

The protein resides in the cytoplasm. It catalyses the reaction (R)-4'-phosphopantetheine + ATP + H(+) = 3'-dephospho-CoA + diphosphate. It functions in the pathway cofactor biosynthesis; coenzyme A biosynthesis; CoA from (R)-pantothenate: step 4/5. Its function is as follows. Reversibly transfers an adenylyl group from ATP to 4'-phosphopantetheine, yielding dephospho-CoA (dPCoA) and pyrophosphate. The protein is Phosphopantetheine adenylyltransferase of Xanthomonas campestris pv. campestris (strain B100).